The sequence spans 108 residues: MAFWNSSSSSSSSGQTDSSSTSSPASLRSQQIKQDLQNQISQELAAANATELVRTITENCFDKCILIPKDTLSPTELQCISQCREKYMRSWNVISKAYIGRIQQEQHH.

Positions 1–29 (MAFWNSSSSSSSSGQTDSSSTSSPASLRS) are enriched in low complexity. The tract at residues 1–34 (MAFWNSSSSSSSSGQTDSSSTSSPASLRSQQIKQ) is disordered. Residues 60–83 (CFDKCILIPKDTLSPTELQCISQC) carry the Twin CX3C motif motif. 2 cysteine pairs are disulfide-bonded: cysteine 60–cysteine 83 and cysteine 64–cysteine 79.

It belongs to the small Tim family. As to quaternary structure, heterohexamer; composed of 3 copies of TIM8 and 3 copies of TIM13, named soluble 70 kDa complex. Associates with the TIM22 complex, whose core is composed of TIM22 and TIM54. Interacts with the transmembrane regions of multi-pass transmembrane proteins in transit.

It is found in the mitochondrion inner membrane. In terms of biological role, mitochondrial intermembrane chaperone that participates in the import and insertion of some multi-pass transmembrane proteins into the mitochondrial inner membrane. Also required for the transfer of beta-barrel precursors from the TOM complex to the sorting and assembly machinery (SAM complex) of the outer membrane. Acts as a chaperone-like protein that protects the hydrophobic precursors from aggregation and guide them through the mitochondrial intermembrane space. The TIM8-TIM13 complex is non essential and only mediates the import of few proteins, while the predominant TIM9-TIM10 70 kDa complex is crucial and mediates the import of much more proteins. This chain is Mitochondrial import inner membrane translocase subunit TIM13 (TIM13), found in Candida albicans (strain SC5314 / ATCC MYA-2876) (Yeast).